We begin with the raw amino-acid sequence, 627 residues long: Druantia protein DruC (627 aa).

It is found in the cytoplasm. Component of antiviral defense system Druantia type I, composed of DruA, DruB, DruC, DruD and DruE. Expression of Druantia in E.coli (strain MG1655) confers resistance to phage lambda, SECphi18, SECphi27 and T4. This Escherichia coli (strain UMEA 4076-1) protein is Druantia protein DruC.